The sequence spans 85 residues: MAHKKAGGSTRNGRDSNAKRLGVKRFGGETVLAGSIIVRQRGTKFHAGNNVGCGRDHTLFATANGKVQFEVKGPNNRKYISIVAE.

Residues 1–21 form a disordered region; that stretch reads MAHKKAGGSTRNGRDSNAKRL.

Belongs to the bacterial ribosomal protein bL27 family.

This chain is Large ribosomal subunit protein bL27, found in Erwinia tasmaniensis (strain DSM 17950 / CFBP 7177 / CIP 109463 / NCPPB 4357 / Et1/99).